Consider the following 305-residue polypeptide: 4-hydroxy-tetrahydrodipicolinate synthase 1 (305 aa).

Residue Thr-53 coordinates pyruvate. Tyr-141 serves as the catalytic Proton donor/acceptor. Catalysis depends on Lys-169, which acts as the Schiff-base intermediate with substrate. Position 209 (Val-209) interacts with pyruvate.

Belongs to the DapA family. As to quaternary structure, homotetramer; dimer of dimers.

The protein resides in the cytoplasm. It carries out the reaction L-aspartate 4-semialdehyde + pyruvate = (2S,4S)-4-hydroxy-2,3,4,5-tetrahydrodipicolinate + H2O + H(+). The protein operates within amino-acid biosynthesis; L-lysine biosynthesis via DAP pathway; (S)-tetrahydrodipicolinate from L-aspartate: step 3/4. Functionally, catalyzes the condensation of (S)-aspartate-beta-semialdehyde [(S)-ASA] and pyruvate to 4-hydroxy-tetrahydrodipicolinate (HTPA). In Streptomyces coelicolor (strain ATCC BAA-471 / A3(2) / M145), this protein is 4-hydroxy-tetrahydrodipicolinate synthase 1.